Reading from the N-terminus, the 116-residue chain is HVA22-like protein e (116 aa).

The next 3 membrane-spanning stretches (helical) occupy residues 12-32 (HSLA…VIAI), 42-62 (QWLA…ILQS), and 63-83 (LLEW…WLVL).

Belongs to the DP1 family. Predominantly expressed in stem.

The protein localises to the membrane. This Arabidopsis thaliana (Mouse-ear cress) protein is HVA22-like protein e (HVA22E).